The primary structure comprises 370 residues: Glutamate 5-kinase (370 aa).

Lysine 17 serves as a coordination point for ATP. Positions 56, 143, and 155 each coordinate substrate. 175-176 (SD) is an ATP binding site. The PUA domain maps to 280-357 (KGEITVDAGA…DEIEGILGYP (78 aa)).

This sequence belongs to the glutamate 5-kinase family.

The protein resides in the cytoplasm. It carries out the reaction L-glutamate + ATP = L-glutamyl 5-phosphate + ADP. It participates in amino-acid biosynthesis; L-proline biosynthesis; L-glutamate 5-semialdehyde from L-glutamate: step 1/2. Catalyzes the transfer of a phosphate group to glutamate to form L-glutamate 5-phosphate. This Paracoccus denitrificans (strain Pd 1222) protein is Glutamate 5-kinase.